The primary structure comprises 312 residues: D-alanine--D-alanine ligase (312 aa).

Residues 102 to 307 (KKIFKMEGIP…FPELTDRLIK (206 aa)) form the ATP-grasp domain. 136–191 (IKEVGVPAVVKANTQGSTIGITFVHVKEKMAEAIESALKYDQDVLVEQFVAGTEVT) contacts ATP. Mg(2+) contacts are provided by Asp-262, Glu-274, and Asn-276.

It belongs to the D-alanine--D-alanine ligase family. The cofactor is Mg(2+). Mn(2+) serves as cofactor.

It localises to the cytoplasm. The enzyme catalyses 2 D-alanine + ATP = D-alanyl-D-alanine + ADP + phosphate + H(+). Its pathway is cell wall biogenesis; peptidoglycan biosynthesis. Functionally, cell wall formation. The protein is D-alanine--D-alanine ligase of Desulforamulus reducens (strain ATCC BAA-1160 / DSM 100696 / MI-1) (Desulfotomaculum reducens).